The primary structure comprises 373 residues: Dual-specificity RNA methyltransferase RlmN (373 aa).

The active-site Proton acceptor is the glutamate 101. In terms of domain architecture, Radical SAM core spans 107–350 (ENKRTTLCVS…TIIRKIRGAD (244 aa)). A disulfide bridge links cysteine 114 with cysteine 355. Residues cysteine 121, cysteine 125, and cysteine 128 each coordinate [4Fe-4S] cluster. Residues 179-180 (GE), serine 211, 233-235 (SLH), and asparagine 312 contribute to the S-adenosyl-L-methionine site. The active-site S-methylcysteine intermediate is cysteine 355.

This sequence belongs to the radical SAM superfamily. RlmN family. [4Fe-4S] cluster serves as cofactor.

It localises to the cytoplasm. The catalysed reaction is adenosine(2503) in 23S rRNA + 2 reduced [2Fe-2S]-[ferredoxin] + 2 S-adenosyl-L-methionine = 2-methyladenosine(2503) in 23S rRNA + 5'-deoxyadenosine + L-methionine + 2 oxidized [2Fe-2S]-[ferredoxin] + S-adenosyl-L-homocysteine. It catalyses the reaction adenosine(37) in tRNA + 2 reduced [2Fe-2S]-[ferredoxin] + 2 S-adenosyl-L-methionine = 2-methyladenosine(37) in tRNA + 5'-deoxyadenosine + L-methionine + 2 oxidized [2Fe-2S]-[ferredoxin] + S-adenosyl-L-homocysteine. Specifically methylates position 2 of adenine 2503 in 23S rRNA and position 2 of adenine 37 in tRNAs. m2A2503 modification seems to play a crucial role in the proofreading step occurring at the peptidyl transferase center and thus would serve to optimize ribosomal fidelity. The chain is Dual-specificity RNA methyltransferase RlmN from Blochmanniella pennsylvanica (strain BPEN).